A 60-amino-acid polypeptide reads, in one-letter code: Transcriptional regulatory protein SenN (60 aa).

The H-T-H motif DNA-binding region spans 11-31 (RFRKRKTFGNQILPLELLIEK).

This sequence to B.subtilis SenS.

In terms of biological role, regulates the expression of extracellular-protein genes of Bacillus natto. The sequence is that of Transcriptional regulatory protein SenN (senN) from Bacillus subtilis subsp. natto.